We begin with the raw amino-acid sequence, 87 residues long: Probable Fe(2+)-trafficking protein (87 aa).

Belongs to the Fe(2+)-trafficking protein family.

Could be a mediator in iron transactions between iron acquisition and iron-requiring processes, such as synthesis and/or repair of Fe-S clusters in biosynthetic enzymes. This is Probable Fe(2+)-trafficking protein from Francisella tularensis subsp. novicida (strain U112).